The following is a 924-amino-acid chain: Exocyst complex component 2 (924 aa).

Residues 8–93 form the IPT/TIG domain; it reads PLVTGISPNE…GTSTVSFKLL (86 aa). Residues 240–260 adopt a coiled-coil conformation; the sequence is QKLENVLNRASNTADTLFQEV. Phosphoserine is present on residues Ser431, Ser432, and Ser435. Thr440 is modified (phosphothreonine). Lys454 is subject to N6-acetyllysine.

This sequence belongs to the SEC5 family. The exocyst complex is composed of EXOC1, EXOC2, EXOC3, EXOC4, EXOC5, EXOC6, EXOC7 and EXOC8. Interacts with EXOC3L1. Interacts with GNEFR/DELGEF; this interaction occurs only in the presence of magnesium or manganese and is stimulated by dCTP or GTP. Interacts with RALA and RALB. Interacts with ARL13B; regulates ARL13B localization to the cilium membrane.

Its subcellular location is the midbody. It is found in the midbody ring. Its function is as follows. Component of the exocyst complex involved in the docking of exocytic vesicles with fusion sites on the plasma membrane. The protein is Exocyst complex component 2 (Exoc2) of Mus musculus (Mouse).